We begin with the raw amino-acid sequence, 472 residues long: 3-isopropylmalate dehydratase large subunit (472 aa).

Cys353, Cys414, and Cys417 together coordinate [4Fe-4S] cluster.

This sequence belongs to the aconitase/IPM isomerase family. LeuC type 1 subfamily. In terms of assembly, heterodimer of LeuC and LeuD. Requires [4Fe-4S] cluster as cofactor.

It catalyses the reaction (2R,3S)-3-isopropylmalate = (2S)-2-isopropylmalate. The protein operates within amino-acid biosynthesis; L-leucine biosynthesis; L-leucine from 3-methyl-2-oxobutanoate: step 2/4. Its function is as follows. Catalyzes the isomerization between 2-isopropylmalate and 3-isopropylmalate, via the formation of 2-isopropylmaleate. The protein is 3-isopropylmalate dehydratase large subunit of Acinetobacter baumannii (strain ACICU).